A 458-amino-acid chain; its full sequence is tRNA(Ile)-lysidine synthase (458 aa).

An ATP-binding site is contributed by 36 to 41 (SGGADS).

It belongs to the tRNA(Ile)-lysidine synthase family.

The protein localises to the cytoplasm. The catalysed reaction is cytidine(34) in tRNA(Ile2) + L-lysine + ATP = lysidine(34) in tRNA(Ile2) + AMP + diphosphate + H(+). In terms of biological role, ligates lysine onto the cytidine present at position 34 of the AUA codon-specific tRNA(Ile) that contains the anticodon CAU, in an ATP-dependent manner. Cytidine is converted to lysidine, thus changing the amino acid specificity of the tRNA from methionine to isoleucine. In Protochlamydia amoebophila (strain UWE25), this protein is tRNA(Ile)-lysidine synthase.